Here is a 590-residue protein sequence, read N- to C-terminus: Phosphomethylpyrimidine synthase (590 aa).

Substrate is bound by residues asparagine 197, methionine 226, tyrosine 255, histidine 291, 311–313 (SRG), 352–355 (DGLR), and glutamate 391. Histidine 395 provides a ligand contact to Zn(2+). Position 418 (tyrosine 418) interacts with substrate. Histidine 459 lines the Zn(2+) pocket. [4Fe-4S] cluster-binding residues include cysteine 539, cysteine 542, and cysteine 547.

This sequence belongs to the ThiC family. Requires [4Fe-4S] cluster as cofactor.

The enzyme catalyses 5-amino-1-(5-phospho-beta-D-ribosyl)imidazole + S-adenosyl-L-methionine = 4-amino-2-methyl-5-(phosphooxymethyl)pyrimidine + CO + 5'-deoxyadenosine + formate + L-methionine + 3 H(+). Its pathway is cofactor biosynthesis; thiamine diphosphate biosynthesis. Catalyzes the synthesis of the hydroxymethylpyrimidine phosphate (HMP-P) moiety of thiamine from aminoimidazole ribotide (AIR) in a radical S-adenosyl-L-methionine (SAM)-dependent reaction. This is Phosphomethylpyrimidine synthase from Bacillus velezensis (strain DSM 23117 / BGSC 10A6 / LMG 26770 / FZB42) (Bacillus amyloliquefaciens subsp. plantarum).